The chain runs to 291 residues: Protease HtpX homolog (291 aa).

2 consecutive transmembrane segments (helical) span residues 4–24 (IALF…VASL) and 38–58 (LGAL…ISLL). Zn(2+) is bound at residue histidine 144. The active site involves glutamate 145. Position 148 (histidine 148) interacts with Zn(2+). The next 2 membrane-spanning stretches (helical) occupy residues 159–179 (LIQG…GYAV) and 199–219 (VTTI…VAWF). Glutamate 224 provides a ligand contact to Zn(2+).

Belongs to the peptidase M48B family. Zn(2+) is required as a cofactor.

It is found in the cell inner membrane. This Paracidovorax citrulli (strain AAC00-1) (Acidovorax citrulli) protein is Protease HtpX homolog.